Reading from the N-terminus, the 332-residue chain is Endonuclease 8-like 2 (332 aa).

Pro-2 (schiff-base intermediate with DNA) is an active-site residue. Glu-3 functions as the Proton donor in the catalytic mechanism. Residue Lys-50 is the Proton donor; for beta-elimination activity of the active site. Lys-50 bears the N6-acetyllysine mark. Residues 59–121 are disordered; that stretch reads DEEMGPPGSS…EDDSEYLERD (63 aa). Ser-68 carries the phosphoserine modification. A compositionally biased stretch (basic and acidic residues) spans 74–84; the sequence is PQKEVQKEGAA. Residues 94–104 show a composition bias toward polar residues; sequence GQKTLDGSSRS. Lys-154 carries the post-translational modification N6-acetyllysine. A DNA-binding site is contributed by Asn-231. Residues 284–320 form an FPG-type zinc finger; the sequence is QVYQKEQCPAGHQVMKEAFGPEDGLQRLTWWCPQCQP. The Proton donor; for delta-elimination activity role is filled by Arg-310.

Belongs to the FPG family. In terms of assembly, binds EP300. As to expression, detected in testis, skeletal muscle, heart, brain, placenta, lung, pancreas, kidney and liver.

Its subcellular location is the nucleus. It catalyses the reaction 2'-deoxyribonucleotide-(2'-deoxyribose 5'-phosphate)-2'-deoxyribonucleotide-DNA = a 3'-end 2'-deoxyribonucleotide-(2,3-dehydro-2,3-deoxyribose 5'-phosphate)-DNA + a 5'-end 5'-phospho-2'-deoxyribonucleoside-DNA + H(+). With respect to regulation, acetylation of Lys-50 leads to loss of DNA nicking activity. Acetylation of Lys-154 has no effect. Functionally, involved in base excision repair of DNA damaged by oxidation or by mutagenic agents. Has DNA glycosylase activity towards 5-hydroxyuracil and other oxidized derivatives of cytosine with a preference for mismatched double-stranded DNA (DNA bubbles). Has low or no DNA glycosylase activity towards thymine glycol, 2-hydroxyadenine, hypoxanthine and 8-oxoguanine. Has AP (apurinic/apyrimidinic) lyase activity and introduces nicks in the DNA strand. Cleaves the DNA backbone by beta-delta elimination to generate a single-strand break at the site of the removed base with both 3'- and 5'-phosphates. The sequence is that of Endonuclease 8-like 2 (NEIL2) from Homo sapiens (Human).